A 250-amino-acid chain; its full sequence is UPF0494 membrane protein PB2B2.07c (250 aa).

The next 3 membrane-spanning stretches (helical) occupy residues 98 to 118, 144 to 164, and 179 to 199; these read WPLLIIWCILIVFAIDKNFEV, IAIYICLFILLLLGLICMFPL, and MIIAVLGAALGMIIAALGATI.

The protein belongs to the UPF0494 family.

The protein resides in the cytoplasm. It is found in the endoplasmic reticulum. The protein localises to the golgi apparatus. It localises to the membrane. The sequence is that of UPF0494 membrane protein PB2B2.07c from Schizosaccharomyces pombe (strain 972 / ATCC 24843) (Fission yeast).